A 305-amino-acid polypeptide reads, in one-letter code: Olfactory receptor 4F17 (305 aa).

Over 1 to 18 (MVTEFIFLGLSDSQGLQT) the chain is Extracellular. A helical membrane pass occupies residues 19–42 (FLFMLFFVFYGGIVFGNLLIVITV). The Cytoplasmic segment spans residues 43–50 (VSDSHLHS). Residues 51–72 (PMYFLLANLSLIDLSLSSVTAP) traverse the membrane as a helical segment. Residues 73–93 (KMITDFFSQRKVISFKGCLVQ) lie on the Extracellular side of the membrane. Cysteine 90 and cysteine 182 are disulfide-bonded. Residues 94-113 (IFLLHFFGGSEMVILIAMGF) traverse the membrane as a helical segment. At 114 to 132 (DRYIAICKPLHYTTIMCGN) the chain is on the cytoplasmic side. The helical transmembrane segment at 133-151 (ACVGIMAVAWGIGFLHSVS) threads the bilayer. Residues 152–188 (QLAFAVHLPFCGPNEVDSFYCDLPRVIKLACTDTYRL) are Extracellular-facing. A helical membrane pass occupies residues 189 to 212 (DIMVIANSGVLTVCSFVLLIISYT). Residues 213-228 (IILMTIQHRPLDKSSK) are Cytoplasmic-facing. A helical transmembrane segment spans residues 229–251 (ALSTLTAHITVVLLFFGPCVFIY). At 252-262 (AWPFPIKSLDK) the chain is on the extracellular side. A helical transmembrane segment spans residues 263–282 (FLAVFYSVITPLLNPIIYTL). Over 283–305 (RNKDMKTAIRQLRKWDAHSSVKF) the chain is Cytoplasmic.

Belongs to the G-protein coupled receptor 1 family.

The protein resides in the cell membrane. Odorant receptor. The polypeptide is Olfactory receptor 4F17 (OR4F17) (Homo sapiens (Human)).